The sequence spans 3354 residues: Cadherin-23 (3354 aa).

The N-terminal stretch at 1–23 (MGRHVATSCHVAWLLVLISGCWG) is a signal peptide. Topologically, residues 24–3064 (QVNRLPFFTN…SVRLPDDMSA (3041 aa)) are extracellular. 27 consecutive Cadherin domains span residues 34–132 (HFFD…APTF), 133–236 (HNQP…DPIF), 237–348 (INLP…APEF), 349–460 (NSSE…RPIF), 461–561 (SQPL…VPTF), 562–671 (QKDA…PPTF), 672–784 (SKPA…APYY), 779–890 (KDAP…DPTF), 891–995 (QNLP…TPTF), 996–1102 (FPAV…RPIF), 1103–1208 (LQSS…APVF), 1210–1313 (QQQY…AVQF), 1314–1418 (SNAS…SPRF), 1420–1527 (FTSD…PPVI), 1529–1634 (SPFG…APMF), 1635–1744 (QQPH…VPTF), 1745–1851 (PRDY…DPVL), 1852–1959 (LNLP…HPLF), 1960–2069 (TKST…RPTF), 2070–2174 (SPAT…RPEF), 2175–2293 (LNPI…TPQF), 2297–2402 (GITY…NPIF), 2403–2509 (DQPS…RPQF), 2510–2611 (SKPQ…RPVF), 2614–2722 (PPNG…EPLF), 2729–2846 (SPQY…PPRF), and 2847–2975 (TKAE…EEEF). 2 N-linked (GlcNAc...) asparagine glycosylation sites follow: Asn-155 and Asn-206. Asn-349, Asn-393, Asn-434, Asn-466, Asn-472, Asn-652, Asn-694, Asn-765, Asn-810, Asn-827, Asn-941, Asn-1001, Asn-1018, Asn-1171, Asn-1282, Asn-1315, Asn-1473, Asn-1534, Asn-1651, Asn-1667, Asn-1818, Asn-1857, Asn-1889, Asn-1902, Asn-2013, Asn-2050, Asn-2129, Asn-2168, Asn-2195, Asn-2263, Asn-2357, and Asn-2369 each carry an N-linked (GlcNAc...) asparagine glycan. 7 N-linked (GlcNAc...) asparagine glycosylation sites follow: Asn-2616, Asn-2749, Asn-2808, Asn-2877, Asn-2896, Asn-2941, and Asn-2981. The chain crosses the membrane as a helical span at residues 3065–3085 (LQMAIIVLAILLFLAAMLFVL). Residues 3086 to 3354 (MNWYYRTVHK…METPLEITEL (269 aa)) lie on the Cytoplasmic side of the membrane.

In terms of assembly, antiparallel heterodimer with PCDH15. Interacts with USH1C and USH1G. In terms of tissue distribution, particularly strong expression in the retina. Found also in the cochlea.

Its subcellular location is the cell membrane. In terms of biological role, cadherins are calcium-dependent cell adhesion proteins. They preferentially interact with themselves in a homophilic manner in connecting cells. CDH23 is required for establishing and/or maintaining the proper organization of the stereocilia bundle of hair cells in the cochlea and the vestibule during late embryonic/early postnatal development. It is part of the functional network formed by USH1C, USH1G, CDH23 and MYO7A that mediates mechanotransduction in cochlear hair cells. Required for normal hearing. The protein is Cadherin-23 of Homo sapiens (Human).